The chain runs to 243 residues: 1-(5-phosphoribosyl)-5-[(5-phosphoribosylamino)methylideneamino] imidazole-4-carboxamide isomerase (243 aa).

Aspartate 8 functions as the Proton acceptor in the catalytic mechanism. Aspartate 129 acts as the Proton donor in catalysis.

Belongs to the HisA/HisF family.

It is found in the cytoplasm. It catalyses the reaction 1-(5-phospho-beta-D-ribosyl)-5-[(5-phospho-beta-D-ribosylamino)methylideneamino]imidazole-4-carboxamide = 5-[(5-phospho-1-deoxy-D-ribulos-1-ylimino)methylamino]-1-(5-phospho-beta-D-ribosyl)imidazole-4-carboxamide. It functions in the pathway amino-acid biosynthesis; L-histidine biosynthesis; L-histidine from 5-phospho-alpha-D-ribose 1-diphosphate: step 4/9. The sequence is that of 1-(5-phosphoribosyl)-5-[(5-phosphoribosylamino)methylideneamino] imidazole-4-carboxamide isomerase from Moorella thermoacetica (strain ATCC 39073 / JCM 9320).